Reading from the N-terminus, the 349-residue chain is DNA polymerase IV (349 aa).

A UmuC domain is found at 7–188 (IIHIDMDYFF…LPVKKLFGVG (182 aa)). Mg(2+) is bound by residues aspartate 11 and aspartate 106. Glutamate 107 is a catalytic residue.

The protein belongs to the DNA polymerase type-Y family. Monomer. The cofactor is Mg(2+).

The protein localises to the cytoplasm. The enzyme catalyses DNA(n) + a 2'-deoxyribonucleoside 5'-triphosphate = DNA(n+1) + diphosphate. Poorly processive, error-prone DNA polymerase involved in untargeted mutagenesis. Copies undamaged DNA at stalled replication forks, which arise in vivo from mismatched or misaligned primer ends. These misaligned primers can be extended by PolIV. Exhibits no 3'-5' exonuclease (proofreading) activity. May be involved in translesional synthesis, in conjunction with the beta clamp from PolIII. This Francisella tularensis subsp. novicida (strain U112) protein is DNA polymerase IV.